The sequence spans 670 residues: MNASSWSLRNLPWFRATLAQWRYALRNTIAMCLALTVAYYLNLDEPYWAMTSAAVVSFPTVGGVISKSLGRIAGSLLGAIAALLLAGHTLNEPWFFLLSMSAWLGFCTWACAHFTNNVAYAFQLAGYTAAIIAFPMVNITEASQLWDIAQARVCEVIVGILCGGMMMMILPSSSDATALLTALKNMHARLLEHASLLWQPETTDAIRAAHEGVIGQILTMNLLRIQAFWSHYRFRQQNARLNALLHQQLRMTSVISSLRRMLLNWPSPPGATREILEQLLTALASSQTDVYTVARIIAPLRPTNVADYRHVAFWQRLRYFCRLYLQSSQELHRLQSGVDDHTRLPRTSGLARHTDNAEAMWSGLRTFCTLMMIGAWSIASQWDAGANALTLAAISCVLYSAVAAPFKSLSLLMRTLVLLSLFSFVVKFGLMVQISDLWQFLLFLFPLLATMQLLKLQMPKFAALWGQLIVFMGSFIAVTNPPVYDFADFLNDNLAKIVGVALAWLAFAILRPGSDARKSRRHIRALRRDFVDQLSRHPTLSESEFESLTYHHVSQLSNSQDALARRWLLRWGVVLLNCSHVVWQLRDWESRSDPLSRVRDNCISLLRGVMSERGVQQKSLAATLEELQRICDSLARHHQPAARELAAIVWRLYCSLSQLEQAPPQGTLAS.

The next 10 membrane-spanning stretches (helical) occupy residues Tyr-23–Asn-42, Tyr-47–Leu-69, Leu-76–Leu-98, Val-118–Thr-140, Val-153–Leu-170, Gln-381–Ala-403, Ser-410–Val-432, Leu-437–Leu-454, Phe-461–Val-483, and Asn-493–Leu-510.

This sequence belongs to the aromatic acid exporter ArAE (TC 2.A.85) family.

The protein resides in the cell membrane. This is an uncharacterized protein from Escherichia coli (strain K12).